A 471-amino-acid chain; its full sequence is Glutamate--tRNA ligase (471 aa).

A 'HIGH' region motif is present at residues P9–G19. Zn(2+) contacts are provided by C98, C100, C125, and H127. Residues K237 to R241 carry the 'KMSKS' region motif. K240 lines the ATP pocket.

Belongs to the class-I aminoacyl-tRNA synthetase family. Glutamate--tRNA ligase type 1 subfamily. Monomer. It depends on Zn(2+) as a cofactor.

It localises to the cytoplasm. It catalyses the reaction tRNA(Glu) + L-glutamate + ATP = L-glutamyl-tRNA(Glu) + AMP + diphosphate. Its function is as follows. Catalyzes the attachment of glutamate to tRNA(Glu) in a two-step reaction: glutamate is first activated by ATP to form Glu-AMP and then transferred to the acceptor end of tRNA(Glu). This Cronobacter sakazakii (strain ATCC BAA-894) (Enterobacter sakazakii) protein is Glutamate--tRNA ligase.